We begin with the raw amino-acid sequence, 465 residues long: 23S rRNA (uracil(1939)-C(5))-methyltransferase RlmD (465 aa).

Residues 1-22 are disordered; the sequence is MSEAVPTSARKSRNAPVAPGPA. The 65-residue stretch at 16-80 folds into the TRAM domain; the sequence is PVAPGPAPVL…PSYEQATVVD (65 aa). [4Fe-4S] cluster-binding residues include Cys93, Cys99, Cys102, and Cys181. Residues Gln289, Phe318, Asn323, Glu339, Asn367, and Asp388 each coordinate S-adenosyl-L-methionine. Cys421 functions as the Nucleophile in the catalytic mechanism.

This sequence belongs to the class I-like SAM-binding methyltransferase superfamily. RNA M5U methyltransferase family. RlmD subfamily.

It carries out the reaction uridine(1939) in 23S rRNA + S-adenosyl-L-methionine = 5-methyluridine(1939) in 23S rRNA + S-adenosyl-L-homocysteine + H(+). Catalyzes the formation of 5-methyl-uridine at position 1939 (m5U1939) in 23S rRNA. The polypeptide is 23S rRNA (uracil(1939)-C(5))-methyltransferase RlmD (Burkholderia lata (strain ATCC 17760 / DSM 23089 / LMG 22485 / NCIMB 9086 / R18194 / 383)).